A 278-amino-acid polypeptide reads, in one-letter code: Ribosomal RNA small subunit methyltransferase A (278 aa).

6 residues coordinate S-adenosyl-L-methionine: Asn28, Leu30, Gly55, Glu77, Asp103, and Asn122.

This sequence belongs to the class I-like SAM-binding methyltransferase superfamily. rRNA adenine N(6)-methyltransferase family. RsmA subfamily.

Its subcellular location is the cytoplasm. It carries out the reaction adenosine(1518)/adenosine(1519) in 16S rRNA + 4 S-adenosyl-L-methionine = N(6)-dimethyladenosine(1518)/N(6)-dimethyladenosine(1519) in 16S rRNA + 4 S-adenosyl-L-homocysteine + 4 H(+). Specifically dimethylates two adjacent adenosines (A1518 and A1519) in the loop of a conserved hairpin near the 3'-end of 16S rRNA in the 30S particle. May play a critical role in biogenesis of 30S subunits. This chain is Ribosomal RNA small subunit methyltransferase A, found in Cereibacter sphaeroides (strain ATCC 17023 / DSM 158 / JCM 6121 / CCUG 31486 / LMG 2827 / NBRC 12203 / NCIMB 8253 / ATH 2.4.1.) (Rhodobacter sphaeroides).